The primary structure comprises 148 residues: Deoxyuridine 5'-triphosphate nucleotidohydrolase (148 aa).

Substrate contacts are provided by residues 67-69 (RSG), Asn-80, 84-86 (LID), and Met-94.

This sequence belongs to the dUTPase family. Requires Mg(2+) as cofactor.

The enzyme catalyses dUTP + H2O = dUMP + diphosphate + H(+). It participates in pyrimidine metabolism; dUMP biosynthesis; dUMP from dCTP (dUTP route): step 2/2. This enzyme is involved in nucleotide metabolism: it produces dUMP, the immediate precursor of thymidine nucleotides and it decreases the intracellular concentration of dUTP so that uracil cannot be incorporated into DNA. The sequence is that of Deoxyuridine 5'-triphosphate nucleotidohydrolase from Paraburkholderia xenovorans (strain LB400).